A 94-amino-acid chain; its full sequence is Large ribosomal subunit protein bL25 (94 aa).

This sequence belongs to the bacterial ribosomal protein bL25 family. As to quaternary structure, part of the 50S ribosomal subunit; part of the 5S rRNA/L5/L18/L25 subcomplex. Contacts the 5S rRNA. Binds to the 5S rRNA independently of L5 and L18.

Functionally, this is one of the proteins that binds to the 5S RNA in the ribosome where it forms part of the central protuberance. The chain is Large ribosomal subunit protein bL25 from Klebsiella pneumoniae (strain 342).